A 239-amino-acid polypeptide reads, in one-letter code: MQRPSGRAPEQLRDVTITRQFTRHAEGSVLVCFGDTKVICTASVEAGVPRFLKGQGQGWITAEYGMLPRSTGSRMGREAARGKQGGRTVEIQRLIGRSLRAAVDLTALGEHSIVIDCDVIQADGGTRTASITGALVALVDAIRYLQREKMITTDPLVHMVAAVSVGIYEGVPVLDLDYPEDSNAETDMNMVMTEEGGLIEIQGTAEKKPFTDEQFAGMFSLAKKGVAELVALQKAALAQ.

Residues arginine 87 and 125–127 each bind phosphate; that span reads GTR.

The protein belongs to the RNase PH family. Homohexameric ring arranged as a trimer of dimers.

It catalyses the reaction tRNA(n+1) + phosphate = tRNA(n) + a ribonucleoside 5'-diphosphate. In terms of biological role, phosphorolytic 3'-5' exoribonuclease that plays an important role in tRNA 3'-end maturation. Removes nucleotide residues following the 3'-CCA terminus of tRNAs; can also add nucleotides to the ends of RNA molecules by using nucleoside diphosphates as substrates, but this may not be physiologically important. Probably plays a role in initiation of 16S rRNA degradation (leading to ribosome degradation) during starvation. The protein is Ribonuclease PH of Saccharophagus degradans (strain 2-40 / ATCC 43961 / DSM 17024).